The following is a 289-amino-acid chain: Probable phosphoribulokinase (289 aa).

12 to 20 lines the ATP pocket; sequence GSSGAGTTT.

It belongs to the phosphoribulokinase family.

It carries out the reaction D-ribulose 5-phosphate + ATP = D-ribulose 1,5-bisphosphate + ADP + H(+). This chain is Probable phosphoribulokinase (prkB), found in Escherichia coli (strain K12).